The sequence spans 173 residues: Bifunctional protein PyrR (173 aa).

The short motif at 93–105 is the PRPP-binding element; that stretch reads VILIDDVLYTGRT.

It belongs to the purine/pyrimidine phosphoribosyltransferase family. PyrR subfamily. In terms of assembly, homodimer and homohexamer; in equilibrium.

The enzyme catalyses UMP + diphosphate = 5-phospho-alpha-D-ribose 1-diphosphate + uracil. In terms of biological role, regulates transcriptional attenuation of the pyrimidine nucleotide (pyr) operon by binding in a uridine-dependent manner to specific sites on pyr mRNA. This disrupts an antiterminator hairpin in the RNA and favors formation of a downstream transcription terminator, leading to a reduced expression of downstream genes. Its function is as follows. Also displays a weak uracil phosphoribosyltransferase activity which is not physiologically significant. This Streptococcus pyogenes serotype M12 (strain MGAS2096) protein is Bifunctional protein PyrR.